Here is a 186-residue protein sequence, read N- to C-terminus: Adenine phosphoribosyltransferase (186 aa).

Belongs to the purine/pyrimidine phosphoribosyltransferase family. Homodimer.

The protein localises to the cytoplasm. The enzyme catalyses AMP + diphosphate = 5-phospho-alpha-D-ribose 1-diphosphate + adenine. Its pathway is purine metabolism; AMP biosynthesis via salvage pathway; AMP from adenine: step 1/1. Catalyzes a salvage reaction resulting in the formation of AMP, that is energically less costly than de novo synthesis. The polypeptide is Adenine phosphoribosyltransferase (Xanthomonas axonopodis pv. citri (strain 306)).